The chain runs to 396 residues: Probable glucan endo-1,6-beta-glucosidase B (396 aa).

Positions M1 to A17 are cleaved as a signal peptide. N30 carries N-linked (GlcNAc...) asparagine glycosylation. E219 acts as the Proton donor in catalysis. N272 is a glycosylation site (N-linked (GlcNAc...) asparagine). E320 (nucleophile) is an active-site residue.

Belongs to the glycosyl hydrolase 5 (cellulase A) family.

It localises to the secreted. The catalysed reaction is Random hydrolysis of (1-&gt;6)-linkages in (1-&gt;6)-beta-D-glucans.. In terms of biological role, beta-glucanases participate in the metabolism of beta-glucan, the main structural component of the cell wall. Acts on lutean, pustulan and 1,6-oligo-beta-D-glucosides. The polypeptide is Probable glucan endo-1,6-beta-glucosidase B (exgB) (Aspergillus fumigatus (strain ATCC MYA-4609 / CBS 101355 / FGSC A1100 / Af293) (Neosartorya fumigata)).